A 237-amino-acid polypeptide reads, in one-letter code: uncharacterized protein (237 aa).

Positions 1–25 form a signal peptide, tat-type signal; the sequence is MRHIFQRLLPRRLWLAGLPCLALLG. The interval 201–237 is disordered; sequence IERQLSTRKPAGNFSPDTPHESEKPAPSTHEVTPDEP.

In terms of processing, exported by the Tat system. The position of the signal peptide cleavage has not been experimentally proven. Can also be exported by the Sec system.

This is an uncharacterized protein from Escherichia coli (strain K12).